Here is a 591-residue protein sequence, read N- to C-terminus: Calnexin (591 aa).

An N-terminal signal peptide occupies residues 1-20; sequence MEGKWLLCLLLVLGTAAVEA. Residues 21–482 lie on the Lumenal side of the membrane; it reads HDGHDDDAID…QMLEAAEERP (462 aa). Ca(2+)-binding residues include serine 75 and aspartate 118. An N6-acetyllysine modification is found at lysine 138. An intrachain disulfide couples cysteine 161 to cysteine 195. Residues tyrosine 165, lysine 167, tyrosine 186, and aspartate 193 each coordinate an alpha-D-glucoside. The segment at 261-347 is disordered; sequence GNLLNDMTPP…EKPEDWDEDM (87 aa). Residues 275 to 320 are compositionally biased toward basic and acidic residues; sequence REIEDPEDRKPEDWDERPKIADPDAVKPDDWDEDAPSKIPDEEATK. The segment at 277–410 is p domain (Extended arm); the sequence is IEDPEDRKPE…RKIPNPDFFE (134 aa). 5 tandem repeats follow at residues 279–291, 296–308, 315–327, 334–346, and 349–359. 4 X approximate repeats regions lie at residues 279–346 and 349–406; these read DPED…WDED and GEWE…IPNP. The span at 324–347 shows a compositional bias: acidic residues; it reads WLDDEPEYIPDPDAEKPEDWDEDM. Residues 327 to 360 are interaction with PPIB; that stretch reads DEPEYIPDPDAEKPEDWDEDMDGEWEAPQIANPK. A disulfide bridge connects residues cysteine 361 and cysteine 367. 3 tandem repeats follow at residues 368–378, 382–392, and 396–406. Glutamate 426 is a binding site for an alpha-D-glucoside. Aspartate 437 serves as a coordination point for Ca(2+). Residues 483–503 form a helical membrane-spanning segment; it reads WLWVVYILTVALPVFLVILFC. 2 S-palmitoyl cysteine lipidation sites follow: cysteine 503 and cysteine 504. At 504-591 the chain is on the cytoplasmic side; it reads CSGKKQSNAM…SPRNRKPRRE (88 aa). Positions 504–591 are sufficient to mediate interaction with SGIP1; that stretch reads CSGKKQSNAM…SPRNRKPRRE (88 aa). The span at 514–539 shows a compositional bias: basic and acidic residues; that stretch reads EYKKTDAPQPDVKDEEGKEEEKNKRD. The interval 514 to 591 is disordered; it reads EYKKTDAPQP…SPRNRKPRRE (78 aa). A Phosphoserine modification is found at serine 553. Residues 555 to 568 are compositionally biased toward acidic residues; sequence AEEDGVTGSQDEED. At threonine 561 the chain carries Phosphothreonine. At serine 563 the chain carries Phosphoserine; by MAPK3. Serine 582 carries the phosphoserine modification.

The protein belongs to the calreticulin family. Interacts with MAPK3/ERK1. Interacts with KCNH2. Associates with ribosomes. The palmitoylated form interacts with the ribosome-translocon complex component SSR1, promoting efficient folding of glycoproteins. Interacts with SERPINA2P/SERPINA2 and with the S and Z variants of SERPINA1. Interacts with SGIP1; involved in negative regulation of endocytosis. Interacts with PPIB. Interacts with SMIM22. Interacts with TMX2. Interacts with TMEM35A/NACHO. Interacts with CHRNA7. Interacts with reticulophagy regulators RETREG2 and RETREG3. Interacts with DNM1L; may form part of a larger protein complex at the ER-mitochondrial interface during mitochondrial fission. Interacts with ADAM7. In terms of processing, phosphorylated at Ser-563 by MAPK3/ERK1. Phosphorylation by MAPK3/ERK1 increases its association with ribosomes. Palmitoylation by DHHC6 leads to the preferential localization to the perinuclear rough ER. It mediates the association of calnexin with the ribosome-translocon complex (RTC) which is required for efficient folding of glycosylated proteins. Post-translationally, ubiquitinated, leading to proteasomal degradation. Probably ubiquitinated by ZNRF4. Expressed in sperm (at protein level).

The protein resides in the endoplasmic reticulum membrane. It localises to the mitochondrion membrane. Its subcellular location is the melanosome membrane. In terms of biological role, calcium-binding protein that interacts with newly synthesized monoglucosylated glycoproteins in the endoplasmic reticulum. It may act in assisting protein assembly and/or in the retention within the ER of unassembled protein subunits. It seems to play a major role in the quality control apparatus of the ER by the retention of incorrectly folded proteins. Associated with partial T-cell antigen receptor complexes that escape the ER of immature thymocytes, it may function as a signaling complex regulating thymocyte maturation. Additionally it may play a role in receptor-mediated endocytosis at the synapse. In Mus musculus (Mouse), this protein is Calnexin (Canx).